We begin with the raw amino-acid sequence, 518 residues long: MTQLHFDNRLRQQLPGYQEEGARRREVRAAWSAVMPTPVAAPYLIAHSAEMAHVLGLDASEVASAAFAQVFGGNALYPGMQPWAVNYGGHQFGHWAGQLGDGRAISLGEAIGIDGGRYELQLKGAGPTPYSRGADGRAVLRSSIREFLCSESMHHLGVPTTRALSLVGTGDAVVRDMFYDGRPQREPGAIVCRVAPSFIRFGNFELPSARGDNALLRQWVDFTIARDFPELVGTAEALYADWFAQVCQRTAVMVAHWMRVGFVHGVMNTDNMSILGLTIDYGPYGWVDDYDPDWTPNTTDAQGRRYRFGTQPQVAYWNLGRLAQAMAPLFADQAPLQQGLNRFRDTYLACDRRDTAAKLGLAECRDEDLELIDALRALMRDAEMDMTLTFRGLIDLSPVHPDPAQLHDAFYDDHKRVASASQLQEWLQRYAARLQQDALSPDERRALMRLANPRYVLRNYLAQQAIDQAEQGDPSGVQELLEVMRRPYDDQSGRAAFAARRPEWARDRAGCSMLSCSS.

Positions 100, 102, 103, 123, 135, 136, 193, and 200 each coordinate ATP. Catalysis depends on D270, which acts as the Proton acceptor. Positions 271 and 280 each coordinate Mg(2+). D280 is a binding site for ATP.

Belongs to the SELO family. Mg(2+) is required as a cofactor. It depends on Mn(2+) as a cofactor.

The catalysed reaction is L-seryl-[protein] + ATP = 3-O-(5'-adenylyl)-L-seryl-[protein] + diphosphate. The enzyme catalyses L-threonyl-[protein] + ATP = 3-O-(5'-adenylyl)-L-threonyl-[protein] + diphosphate. It carries out the reaction L-tyrosyl-[protein] + ATP = O-(5'-adenylyl)-L-tyrosyl-[protein] + diphosphate. It catalyses the reaction L-histidyl-[protein] + UTP = N(tele)-(5'-uridylyl)-L-histidyl-[protein] + diphosphate. The catalysed reaction is L-seryl-[protein] + UTP = O-(5'-uridylyl)-L-seryl-[protein] + diphosphate. The enzyme catalyses L-tyrosyl-[protein] + UTP = O-(5'-uridylyl)-L-tyrosyl-[protein] + diphosphate. Functionally, nucleotidyltransferase involved in the post-translational modification of proteins. It can catalyze the addition of adenosine monophosphate (AMP) or uridine monophosphate (UMP) to a protein, resulting in modifications known as AMPylation and UMPylation. The sequence is that of Protein nucleotidyltransferase YdiU from Xanthomonas oryzae pv. oryzae (strain MAFF 311018).